A 116-amino-acid polypeptide reads, in one-letter code: Large ribosomal subunit protein eL22B (116 aa).

It belongs to the eukaryotic ribosomal protein eL22 family.

This chain is Large ribosomal subunit protein eL22B (rpl22a), found in Dictyostelium discoideum (Social amoeba).